The primary structure comprises 377 residues: NAC domain-containing protein 76 (377 aa).

The NAC domain occupies 10–159; the sequence is VPPGFRFHPT…GWVVCRAFKK (150 aa). A DNA-binding region spans residues 110 to 165; the sequence is IGMRKTLVFYKGRAPNGQKTDWIMHEYRLESDENAPPQEEGWVVCRAFKKKPMTGQ. Residues 312 to 347 form a disordered region; it reads GVSGFGGHHEEDNNKIGHYNNEESNNKGSVETASST. The segment covering 318–336 has biased composition (basic and acidic residues); sequence GHHEEDNNKIGHYNNEESN. Residues 337–347 show a composition bias toward polar residues; sequence NKGSVETASST.

The protein belongs to the plant vascular related NAC-domain protein family. Interacts with NAC030/VND7. Detected in root protoxylem and metaxylem poles and in vessels of protoxylems, outermost metaxylems, inner metaxylems, shoots and hypocotyls. Expressed in roots, hypocotyls, cotyledons and leaves. Present in developing xylems. Specifically expressed in vessels but not in interfascicular fibers in stems.

Its subcellular location is the nucleus. Functionally, transcription activator that binds to the secondary wall NAC binding element (SNBE), 5'-(T/A)NN(C/T)(T/C/G)TNNNNNNNA(A/C)GN(A/C/T)(A/T)-3', in the promoter of target genes. Involved in xylem formation by promoting the expression of secondary wall-associated transcription factors and of genes involved in secondary wall biosynthesis and programmed cell death, genes driven by the secondary wall NAC binding element (SNBE). Triggers thickening of secondary walls. In Arabidopsis thaliana (Mouse-ear cress), this protein is NAC domain-containing protein 76.